Here is a 287-residue protein sequence, read N- to C-terminus: Glucose import system permease protein GlcU (287 aa).

Transmembrane regions (helical) follow at residues 14–34 (HYLA…AMLI), 76–96 (IIVI…AYFF), 113–133 (VLFS…LLPL), 149–169 (IIFA…SMFI), 194–214 (IVFP…IIQA), 218–238 (FFIP…IAVL), and 250–270 (DTFA…VFLG). An ABC transmembrane type-1 domain is found at 71-269 (LINSLIIVIP…IIPLAIFVFL (199 aa)).

The protein belongs to the binding-protein-dependent transport system permease family. The complex is composed of two ATP-binding proteins (GlcV), two transmembrane proteins (GlcT and GlcU) and a solute-binding protein (GlcS).

The protein localises to the cell membrane. Part of the ABC transporter complex GlcSTUV involved in glucose uptake. Responsible for the translocation of the substrate across the membrane. This chain is Glucose import system permease protein GlcU, found in Saccharolobus solfataricus (strain ATCC 35092 / DSM 1617 / JCM 11322 / P2) (Sulfolobus solfataricus).